A 372-amino-acid chain; its full sequence is 4-hydroxy-3-methylbut-2-en-1-yl diphosphate synthase (flavodoxin) (372 aa).

[4Fe-4S] cluster contacts are provided by Cys270, Cys273, Cys305, and Glu312.

It belongs to the IspG family. The cofactor is [4Fe-4S] cluster.

It catalyses the reaction (2E)-4-hydroxy-3-methylbut-2-enyl diphosphate + oxidized [flavodoxin] + H2O + 2 H(+) = 2-C-methyl-D-erythritol 2,4-cyclic diphosphate + reduced [flavodoxin]. The protein operates within isoprenoid biosynthesis; isopentenyl diphosphate biosynthesis via DXP pathway; isopentenyl diphosphate from 1-deoxy-D-xylulose 5-phosphate: step 5/6. Its function is as follows. Converts 2C-methyl-D-erythritol 2,4-cyclodiphosphate (ME-2,4cPP) into 1-hydroxy-2-methyl-2-(E)-butenyl 4-diphosphate. In Escherichia coli O9:H4 (strain HS), this protein is 4-hydroxy-3-methylbut-2-en-1-yl diphosphate synthase (flavodoxin).